We begin with the raw amino-acid sequence, 416 residues long: E3 ubiquitin-protein ligase makorin-2 (416 aa).

C3H1-type zinc fingers lie at residues 2–29 (STKQ…HDLA) and 31–58 (SKPS…HTRP). The segment covering 113–122 (NLSGMAERKT) has biased composition (basic and acidic residues). The disordered stretch occupies residues 113–142 (NLSGMAERKTQPSMVSNPGSCSDPQPSPEM). Residues 123–136 (QPSMVSNPGSCSDP) are compositionally biased toward polar residues. Position 139 is a phosphoserine (Ser139). The segment at 165 to 192 (SNEQQLCPYAAAGECRFGDACVYLHGEV) adopts a C3H1-type 3 zinc-finger fold. Residues 193 to 222 (CEICRLQVLHPFDPEQRKAHEKICMLTFEH) are makorin-type Cys-His. The segment at 238–292 (CSICMEVILEKASASERRFGILSNCNHTYCLSCIRQWRCAKQFENPIIKSCPECR) adopts an RING-type zinc-finger fold. The segment at 321-350 (GMGKKACKYFEQGKGTCPFGSKCLYRHAYP) adopts a C3H1-type 4 zinc-finger fold.

In terms of assembly, interacts with PDLIM2 (via LIM zinc-binding domain). Interacts with RELA. In terms of tissue distribution, expressed in sperm, with significantly reduced expression in sperm of patients with oligoasthenoteratozoospermia (at protein level). Widely expressed with expression in testis, ovary, small intestine, colon, peripheral blood leukocytes, fetal liver, bone marrow, thymus, lymph node and spleen.

Its subcellular location is the cytoplasm. The protein localises to the nucleus. It carries out the reaction S-ubiquitinyl-[E2 ubiquitin-conjugating enzyme]-L-cysteine + [acceptor protein]-L-lysine = [E2 ubiquitin-conjugating enzyme]-L-cysteine + N(6)-ubiquitinyl-[acceptor protein]-L-lysine.. The protein operates within protein modification; protein ubiquitination. Its function is as follows. E3 ubiquitin ligase catalyzing the covalent attachment of ubiquitin moieties onto substrate proteins. Promotes the polyubiquitination and proteasome-dependent degradation of RELA/p65, thereby suppressing RELA-mediated NF-kappaB transactivation and negatively regulating inflammatory responses. Plays a role in the regulation of spermiation and in male fertility. The sequence is that of E3 ubiquitin-protein ligase makorin-2 (MKRN2) from Homo sapiens (Human).